Consider the following 170-residue polypeptide: NADPH-dependent 7-cyano-7-deazaguanine reductase (170 aa).

The active-site Thioimide intermediate is Cys-58. The active-site Proton donor is the Asp-65. Substrate-binding positions include Val-80–Ser-82 and His-99–Glu-100.

It belongs to the GTP cyclohydrolase I family. QueF type 1 subfamily.

It is found in the cytoplasm. The catalysed reaction is 7-aminomethyl-7-carbaguanine + 2 NADP(+) = 7-cyano-7-deazaguanine + 2 NADPH + 3 H(+). It participates in tRNA modification; tRNA-queuosine biosynthesis. Catalyzes the NADPH-dependent reduction of 7-cyano-7-deazaguanine (preQ0) to 7-aminomethyl-7-deazaguanine (preQ1). The sequence is that of NADPH-dependent 7-cyano-7-deazaguanine reductase from Bdellovibrio bacteriovorus (strain ATCC 15356 / DSM 50701 / NCIMB 9529 / HD100).